Reading from the N-terminus, the 247-residue chain is MPRKKQNERGTNKQEIINIETKSSTFQEKQRQSKTDQISTVWRKEQKKQELKVHTELHPQHRTGFNEDKGTDPWLTTWRIITVILGTSCIILVTKVGFLIPNLFSRGEKRSRELSLLDSLCLKNNDSFCDLCSHDWIAFGNNFYLFFRGTKTWAESKSACEELNSYLLDIDSRAELENLLLFEINGWILFKTDAINRSLRKNYIKIHQTLFNDSEKKNHSCHYLSGNQFSAGDCSSKKAYTCEFNLQ.

A compositionally biased stretch (basic and acidic residues) spans 1-12 (MPRKKQNERGTN). Residues 1 to 39 (MPRKKQNERGTNKQEIINIETKSSTFQEKQRQSKTDQIS) form a disordered region. Topologically, residues 1 to 79 (MPRKKQNERG…GTDPWLTTWR (79 aa)) are cytoplasmic. A helical membrane pass occupies residues 80–100 (IITVILGTSCIILVTKVGFLI). Residues 101 to 247 (PNLFSRGEKR…KAYTCEFNLQ (147 aa)) lie on the Extracellular side of the membrane. Residues asparagine 125, asparagine 196, asparagine 212, and asparagine 218 are each glycosylated (N-linked (GlcNAc...) asparagine). A C-type lectin domain is found at 139–243 (FGNNFYLFFR…CSSKKAYTCE (105 aa)). 2 disulfides stabilise this stretch: cysteine 160/cysteine 242 and cysteine 221/cysteine 234.

As to quaternary structure, heterodimer with KLRE1. Expressed in natural killer (NK) cells.

The protein resides in the cell membrane. In terms of biological role, lectin-like receptor for natural killer (NK) cells. Heterodimer formation with KLRE1 mediates NK cell cytolytic activity. In Rattus norvegicus (Rat), this protein is Killer cell lectin-like receptor subfamily I member 2.